A 291-amino-acid polypeptide reads, in one-letter code: N-acetylmannosamine kinase (291 aa).

Residues 5–12 (AIDIGGTK) and 132–139 (GVGGGVVS) contribute to the ATP site. The Zn(2+) site is built by histidine 156, cysteine 166, cysteine 168, and cysteine 173.

Belongs to the ROK (NagC/XylR) family. NanK subfamily. Homodimer.

The enzyme catalyses an N-acyl-D-mannosamine + ATP = an N-acyl-D-mannosamine 6-phosphate + ADP + H(+). It functions in the pathway amino-sugar metabolism; N-acetylneuraminate degradation; D-fructose 6-phosphate from N-acetylneuraminate: step 2/5. Functionally, catalyzes the phosphorylation of N-acetylmannosamine (ManNAc) to ManNAc-6-P. The sequence is that of N-acetylmannosamine kinase (nanK1) from Escherichia coli O6:H1 (strain CFT073 / ATCC 700928 / UPEC).